We begin with the raw amino-acid sequence, 565 residues long: NAD-dependent malic enzyme (565 aa).

Residue tyrosine 104 is the Proton donor of the active site. NAD(+) is bound at residue arginine 157. Lysine 175 functions as the Proton acceptor in the catalytic mechanism. Residues glutamate 246, aspartate 247, and aspartate 270 each contribute to the a divalent metal cation site. 2 residues coordinate NAD(+): aspartate 270 and asparagine 418.

Belongs to the malic enzymes family. In terms of assembly, homotetramer. Requires Mg(2+) as cofactor. Mn(2+) serves as cofactor.

It catalyses the reaction (S)-malate + NAD(+) = pyruvate + CO2 + NADH. It carries out the reaction oxaloacetate + H(+) = pyruvate + CO2. The sequence is that of NAD-dependent malic enzyme from Proteus mirabilis (strain HI4320).